The chain runs to 212 residues: Large ribosomal subunit protein uL3 (212 aa).

A disordered region spans residues 133–156 (SMTHGSKNHRLPGSTGAGTTPGRV).

This sequence belongs to the universal ribosomal protein uL3 family. As to quaternary structure, part of the 50S ribosomal subunit. Forms a cluster with proteins L14 and L19.

One of the primary rRNA binding proteins, it binds directly near the 3'-end of the 23S rRNA, where it nucleates assembly of the 50S subunit. This chain is Large ribosomal subunit protein uL3, found in Crocosphaera subtropica (strain ATCC 51142 / BH68) (Cyanothece sp. (strain ATCC 51142)).